The chain runs to 1065 residues: Carbamoyl phosphate synthase large chain (1065 aa).

A carboxyphosphate synthetic domain region spans residues 1–401 (MPKRRDIETI…SLLKAVRSLE (401 aa)). ATP-binding residues include Arg129, Arg169, Gly175, Gly176, Arg208, Ile210, Glu215, Gly241, Ile242, His243, Gln284, and Glu298. The ATP-grasp 1 domain occupies 133–327 (RALMNELGEP…IAKLAAKIAV (195 aa)). The Mg(2+) site is built by Gln284, Glu298, and Asn300. Positions 284, 298, and 300 each coordinate Mn(2+). The oligomerization domain stretch occupies residues 402–546 (IGVHHLELNE…YSTYEEENES (145 aa)). The carbamoyl phosphate synthetic domain stretch occupies residues 547–929 (IVTEKPSVIV…ALYKGLVASG (383 aa)). The ATP-grasp 2 domain occupies 671 to 861 (EQALSELGIP…MANLATKAIL (191 aa)). Positions 707, 746, 748, 752, 777, 778, 779, 780, 820, and 832 each coordinate ATP. Mg(2+) is bound by residues Gln820, Glu832, and Asn834. The Mn(2+) site is built by Gln820, Glu832, and Asn834. The MGS-like domain occupies 930–1065 (IHIQPHGAVL…TAMTEGLVRS (136 aa)). Residues 930–1065 (IHIQPHGAVL…TAMTEGLVRS (136 aa)) are allosteric domain.

It belongs to the CarB family. In terms of assembly, composed of two chains; the small (or glutamine) chain promotes the hydrolysis of glutamine to ammonia, which is used by the large (or ammonia) chain to synthesize carbamoyl phosphate. Tetramer of heterodimers (alpha,beta)4. Requires Mg(2+) as cofactor. Mn(2+) serves as cofactor.

The catalysed reaction is hydrogencarbonate + L-glutamine + 2 ATP + H2O = carbamoyl phosphate + L-glutamate + 2 ADP + phosphate + 2 H(+). It catalyses the reaction hydrogencarbonate + NH4(+) + 2 ATP = carbamoyl phosphate + 2 ADP + phosphate + 2 H(+). Its pathway is amino-acid biosynthesis; L-arginine biosynthesis; carbamoyl phosphate from bicarbonate: step 1/1. It participates in pyrimidine metabolism; UMP biosynthesis via de novo pathway; (S)-dihydroorotate from bicarbonate: step 1/3. In terms of biological role, large subunit of the glutamine-dependent carbamoyl phosphate synthetase (CPSase). CPSase catalyzes the formation of carbamoyl phosphate from the ammonia moiety of glutamine, carbonate, and phosphate donated by ATP, constituting the first step of 2 biosynthetic pathways, one leading to arginine and/or urea and the other to pyrimidine nucleotides. The large subunit (synthetase) binds the substrates ammonia (free or transferred from glutamine from the small subunit), hydrogencarbonate and ATP and carries out an ATP-coupled ligase reaction, activating hydrogencarbonate by forming carboxy phosphate which reacts with ammonia to form carbamoyl phosphate. This chain is Carbamoyl phosphate synthase large chain, found in Bacillus caldolyticus.